We begin with the raw amino-acid sequence, 393 residues long: MARNNYLFTSESVSEGHPDKVCDRISDAILDAFLSEEPEARVACETFATTNRVVIGGEVGLSDQDKLAEYMGQVDPIVRACVKDIGYEQDKFHHETVEITNLLHEQSAHIAQGVDAAENKDEGAGDQGIMFGFAVAETPELMPAPIHYAHAILKKLAEVRKSGEQAVLGPDAKSQLSVRYEDGTPVGVSSIVLSTQHLDESLTSDDVRAIVEPYIRGELPDGWISAETEWHVNPTGKFVIGGPDGDAGLTGRKIIVDTYGGAAPHGGGAFSGKDPTKVDRSAAYASRYLAKNVVAAGLAHRCTIQLSYAIGVAKPLSIYCDTHQTGQVHEAEIERALGQVMDLTPRGIRTHLGMNRPIYERTAAYGHFGRAAEADGGFSWEKTDLADAIKAAL.

An ATP-binding site is contributed by His-17. Asp-19 contacts Mg(2+). Glu-45 is a binding site for K(+). Residues Glu-58 and Gln-106 each contribute to the L-methionine site. The interval 106 to 116 (QSAHIAQGVDA) is flexible loop. Residues 171-173 (DAK), 237-238 (KF), Asp-246, 252-253 (RK), Ala-269, and Lys-273 contribute to the ATP site. An L-methionine-binding site is contributed by Asp-246. Lys-277 is a binding site for L-methionine.

This sequence belongs to the AdoMet synthase family. Homotetramer; dimer of dimers. Requires Mg(2+) as cofactor. The cofactor is K(+).

It is found in the cytoplasm. It carries out the reaction L-methionine + ATP + H2O = S-adenosyl-L-methionine + phosphate + diphosphate. It functions in the pathway amino-acid biosynthesis; S-adenosyl-L-methionine biosynthesis; S-adenosyl-L-methionine from L-methionine: step 1/1. Catalyzes the formation of S-adenosylmethionine (AdoMet) from methionine and ATP. The overall synthetic reaction is composed of two sequential steps, AdoMet formation and the subsequent tripolyphosphate hydrolysis which occurs prior to release of AdoMet from the enzyme. This Jannaschia sp. (strain CCS1) protein is S-adenosylmethionine synthase.